The sequence spans 644 residues: Exoribonuclease 2 (644 aa).

The RNB domain occupies 189–516 (REDLTALDFV…NHRLLKAVIK (328 aa)). The S1 motif domain maps to 561-643 (DTRFAAEIVD…ETRSIIARPV (83 aa)).

Belongs to the RNR ribonuclease family. RNase II subfamily.

It localises to the cytoplasm. The catalysed reaction is Exonucleolytic cleavage in the 3'- to 5'-direction to yield nucleoside 5'-phosphates.. In terms of biological role, involved in mRNA degradation. Hydrolyzes single-stranded polyribonucleotides processively in the 3' to 5' direction. The protein is Exoribonuclease 2 of Escherichia coli (strain SMS-3-5 / SECEC).